Consider the following 258-residue polypeptide: UPF0758 protein Bamb_2548 (258 aa).

Residues 1 to 43 are disordered; sequence MLSPCLAAPATECRDPADAPAAPARHTGPARPRKRRPRNWKPH. Residues 31 to 43 are compositionally biased toward basic residues; it reads RPRKRRPRNWKPH. The 123-residue stretch at 136–258 folds into the MPN domain; the sequence is QIDSPGAVED…TFSFARAGWL (123 aa). Zn(2+) is bound by residues H207, H209, and D220. Positions 207–220 match the JAMM motif motif; that stretch reads HNHPSGAVQPSAED.

It belongs to the UPF0758 family.

This Burkholderia ambifaria (strain ATCC BAA-244 / DSM 16087 / CCUG 44356 / LMG 19182 / AMMD) (Burkholderia cepacia (strain AMMD)) protein is UPF0758 protein Bamb_2548.